Consider the following 74-residue polypeptide: Neuropeptide-like protein 33 (74 aa).

Positions 1–21 (MISTSLLLVVLLFAILAIVDA) are cleaved as a signal peptide. Tyr-72 is subject to Tyrosine amide.

Belongs to the YARP (YGGW-amide related peptide) family. As to expression, expressed in hypoderm.

The protein resides in the secreted. In terms of biological role, may have antifungic activity against D.coniospora. The protein is Neuropeptide-like protein 33 (nlp-33) of Caenorhabditis elegans.